A 246-amino-acid polypeptide reads, in one-letter code: Probable fimbrial chaperone YadV (246 aa).

A signal peptide spans 1–25 (MFFNTKHTTALCFVTCMAFSSSSIA).

It belongs to the periplasmic pilus chaperone family.

The protein resides in the periplasm. Functionally, part of the yadCKLM-htrE-yadVN fimbrial operon. Could contribute to adhesion to various surfaces in specific environmental niches. This chain is Probable fimbrial chaperone YadV (yadV), found in Escherichia coli (strain K12).